The chain runs to 512 residues: FAD-dependent monooxygenase prx3 (512 aa).

The first 19 residues, 1-19 (MLSLKAFLALSLSIHLSQG), serve as a signal peptide directing secretion. Residues 63 to 235 (CQTTPTCVFA…TRFDLATFSV (173 aa)) form the FAD-binding PCMH-type domain. The residue at position 100 (His100) is a Pros-8alpha-FAD histidine. Asn197, Asn281, Asn307, Asn329, Asn361, and Asn477 each carry an N-linked (GlcNAc...) asparagine glycan.

It belongs to the oxygen-dependent FAD-linked oxidoreductase family.

The protein operates within sesquiterpene biosynthesis. Its function is as follows. FAD-dependent monooxygenase; part of the gene cluster that mediates the biosynthesis of PR-toxin, a bicyclic sesquiterpene belonging to the eremophilane class and acting as a mycotoxin. The first step of the pathway is catalyzed by the aristolochene synthase which performs the cyclization of trans,trans-farnesyl diphosphate (FPP) to the bicyclic sesquiterpene aristolochene. Following the formation of aristolochene, the non-oxygenated aristolochene is converted to the trioxygenated intermediate eremofortin B, via 7-epi-neopetasone. This conversion appears to involve three enzymes, a hydroxysterol oxidase-like enzyme, the quinone-oxidase prx3 that forms the quinone-type-structure in the bicyclic nucleus of aristolochene with the C8-oxo group and the C-3 hydroxyl group, and the P450 monooxygenase ORF6 that introduces the epoxide at the double bond between carbons 1 and 2. No monoxy or dioxy-intermediates have been reported to be released to the broth, so these three early oxidative reactions may be coupled together. Eremofortin B is further oxidized by another P450 monooxygenase, that introduces a second epoxide between carbons 7 and 11 prior to acetylation to eremofortin A by the acetyltransferase ORF8. The second epoxidation may be performed by a second P450 monooxygenase. After the acetylation step, eremofortin A is converted to eremofortin C and then to PR-toxin. First the conversion of eremofortin A to eremofortin C proceeds by oxidation of the side chain of the molecule at C-12 and is catalyzed by the short-chain oxidoreductase prx1. The cytochrome P450 monooxygenase ORF6 is probably also involved in this step. The primary alcohol formed at C-12 is finally oxidized by the short-chain alcohol dehydrogenase prx4 that forms PR-toxin. In Penicillium roqueforti (strain FM164), this protein is FAD-dependent monooxygenase prx3.